Reading from the N-terminus, the 567-residue chain is Putative laccase-17 (567 aa).

The N-terminal stretch at 1–22 is a signal peptide; that stretch reads MPSRGCSCWLLSLALLCSLAAA. Plastocyanin-like domains follow at residues 30 to 146 and 158 to 310; these read VIRE…PRDG and ELAP…YGAA. A glycan (N-linked (GlcNAc...) asparagine) is linked at Asn76. Residues His80, His82, His125, and His127 each coordinate Cu cation. Residues Asn187, Asn241, Asn298, Asn312, Asn327, Asn365, Asn368, Asn378, Asn388, and Asn430 are each glycosylated (N-linked (GlcNAc...) asparagine). The Plastocyanin-like 3 domain occupies 415-551; the sequence is DFPANPPVQF…AMAFLVDDGV (137 aa). Cu cation contacts are provided by His468, His471, His473, His530, Cys531, His532, and His536.

This sequence belongs to the multicopper oxidase family. It depends on Cu cation as a cofactor.

The protein resides in the secreted. It localises to the extracellular space. Its subcellular location is the apoplast. The catalysed reaction is 4 hydroquinone + O2 = 4 benzosemiquinone + 2 H2O. Lignin degradation and detoxification of lignin-derived products. This chain is Putative laccase-17 (LAC17), found in Oryza sativa subsp. japonica (Rice).